Consider the following 93-residue polypeptide: Small ribosomal subunit protein uS19c (93 aa).

The tract at residues 73 to 93 (EFSPTRTFRGHTKSDKKSRRP) is disordered. Residues 80-93 (FRGHTKSDKKSRRP) show a composition bias toward basic residues.

Belongs to the universal ribosomal protein uS19 family.

The protein localises to the plastid. The protein resides in the chloroplast. Its function is as follows. Protein S19 forms a complex with S13 that binds strongly to the 16S ribosomal RNA. The sequence is that of Small ribosomal subunit protein uS19c (rps19) from Mesostigma viride (Green alga).